The primary structure comprises 226 residues: 2-C-methyl-D-erythritol 4-phosphate cytidylyltransferase (226 aa).

It belongs to the IspD/TarI cytidylyltransferase family. IspD subfamily.

The catalysed reaction is 2-C-methyl-D-erythritol 4-phosphate + CTP + H(+) = 4-CDP-2-C-methyl-D-erythritol + diphosphate. Its pathway is isoprenoid biosynthesis; isopentenyl diphosphate biosynthesis via DXP pathway; isopentenyl diphosphate from 1-deoxy-D-xylulose 5-phosphate: step 2/6. Its function is as follows. Catalyzes the formation of 4-diphosphocytidyl-2-C-methyl-D-erythritol from CTP and 2-C-methyl-D-erythritol 4-phosphate (MEP). In Synechococcus sp. (strain CC9902), this protein is 2-C-methyl-D-erythritol 4-phosphate cytidylyltransferase.